Here is a 141-residue protein sequence, read N- to C-terminus: Hemoglobin subunit alpha-D (141 aa).

The 141-residue stretch at 1–141 (VLTAEDRRLL…VADVLSEKYR (141 aa)) folds into the Globin domain. Positions 57 and 87 each coordinate heme b.

This sequence belongs to the globin family. The deoxy-Hb is a heterotetramer of two alpha and two beta chains, but oxygenation results in dissociation to dimers. As to expression, red blood cells.

Its function is as follows. Involved in oxygen transport from the lung to the various peripheral tissues. This Erythrolamprus miliaris (South American water snake) protein is Hemoglobin subunit alpha-D (HBAD).